Here is a 418-residue protein sequence, read N- to C-terminus: Putative ion-transport protein YfeO (418 aa).

11 helical membrane-spanning segments follow: residues 9–31, 55–77, 90–112, 122–140, 147–169, 189–211, 223–244, 259–281, 301–323, 343–363, and 376–398; these read MLLL…IVVM, SPLW…IRFS, LIGA…LGLA, PIMT…RLLP, WTIL…AALI, PLMA…FSLP, ILSG…VWCL, LVLG…VSLF, YFLL…FRGG, VPAV…VLVV, and VVVP…WLLL.

It belongs to the chloride channel (TC 2.A.49) family.

Its subcellular location is the cell membrane. The protein is Putative ion-transport protein YfeO (yfeO) of Escherichia coli O157:H7.